Reading from the N-terminus, the 436-residue chain is GTPase Der (436 aa).

EngA-type G domains follow at residues 4 to 167 (PVIA…PTDL) and 175 to 351 (IKFS…ENQN). Residues 10 to 17 (GRPNVGKS), 57 to 61 (DTGGI), 119 to 122 (NKAD), 181 to 188 (GRPNVGKS), 229 to 233 (DTAGI), and 294 to 297 (NKWD) contribute to the GTP site. One can recognise a KH-like domain in the interval 352-436 (RRIQSALLND…PIHLIPRQRK (85 aa)).

This sequence belongs to the TRAFAC class TrmE-Era-EngA-EngB-Septin-like GTPase superfamily. EngA (Der) GTPase family. As to quaternary structure, associates with the 50S ribosomal subunit.

In terms of biological role, GTPase that plays an essential role in the late steps of ribosome biogenesis. This Latilactobacillus sakei subsp. sakei (strain 23K) (Lactobacillus sakei subsp. sakei) protein is GTPase Der.